The primary structure comprises 56 residues: Large ribosomal subunit protein bL32 (56 aa).

Residues 1–37 (MAVQQNKKSRSRRDMRRSHDALTTAAVSVDKTTGETH) are disordered. The segment covering 7-16 (KKSRSRRDMR) has biased composition (basic residues).

It belongs to the bacterial ribosomal protein bL32 family.

This is Large ribosomal subunit protein bL32 from Haemophilus ducreyi (strain 35000HP / ATCC 700724).